The following is a 509-amino-acid chain: Aspartic proteinase oryzasin-1 (509 aa).

Residues 1-24 (MGTRSVALVLLAAVLLQALLPASA) form the signal peptide. Positions 25–67 (AEGLVRIALKKRPIDENSRVAARLSGEEGARRLGLRGANSLGG) are cleaved as a propeptide — activation peptide. In terms of domain architecture, Peptidase A1 spans 85–506 (YFGEIGVGTP…DYGKMRVGFA (422 aa)). Residue Asp103 is part of the active site. The cysteines at positions 116 and 122 are disulfide-linked. The N-linked (GlcNAc...) asparagine glycan is linked to Asn252. Cysteines 281 and 285 form a disulfide. Asp290 is an active-site residue. Residues 315–420 (VVSQECKTVV…NQLCDKLPSP (106 aa)) enclose the Saposin B-type domain. Disulfide bonds link Cys320–Cys414, Cys345–Cys386, Cys351–Cys383, and Cys428–Cys465. Asn400 is a glycosylation site (N-linked (GlcNAc...) asparagine).

Belongs to the peptidase A1 family.

The protein resides in the vacuole. Involved in the breakdown of propeptides of storage proteins in protein-storage vacuoles. The polypeptide is Aspartic proteinase oryzasin-1 (Oryza sativa subsp. japonica (Rice)).